Consider the following 570-residue polypeptide: Peptidyl-prolyl cis-trans isomerase FKBP9 (570 aa).

The N-terminal stretch at 1-24 (MALGARGWRRRSLLLLLLWVTGQA) is a signal peptide. 4 PPIase FKBP-type domains span residues 54–142 (GDFV…VDIW), 166–254 (SDFV…LDLH), 278–365 (GDFL…IDFH), and 389–477 (GDYL…LELV). Asparagine 174, asparagine 286, asparagine 302, and asparagine 397 each carry an N-linked (GlcNAc...) asparagine glycan. EF-hand domains are found at residues 488 to 523 (WNGE…QVAT) and 533 to 568 (NAEM…AKHD). 10 residues coordinate Ca(2+): aspartate 501, aspartate 503, asparagine 505, glutamate 507, glutamate 512, aspartate 546, asparagine 548, aspartate 550, lysine 552, and glutamate 557. The short motif at 567 to 570 (HDEL) is the Prevents secretion from ER element.

Post-translationally, phosphorylated. Predominantly expressed in heart, skeletal muscle, lung, liver and kidney. Lower levels found in brain, spleen and testis.

It localises to the endoplasmic reticulum lumen. It carries out the reaction [protein]-peptidylproline (omega=180) = [protein]-peptidylproline (omega=0). Its activity is regulated as follows. Inhibited by FK506. Functionally, PPIases accelerate the folding of proteins during protein synthesis. This Mus musculus (Mouse) protein is Peptidyl-prolyl cis-trans isomerase FKBP9 (Fkbp9).